A 32-amino-acid chain; its full sequence is MSDINATRLPIWGIGCDPCIGDDVTILLTRGE.

Positions 1–10 are excised as a propeptide; it reads MSDINATRLP. Positions 11-18 form a cross-link, cyclopeptide (Ile-Pro); it reads IWGIGCDP. Positions 12–16 form a cross-link, 2'-cysteinyl-6'-hydroxytryptophan sulfoxide (Trp-Cys); the sequence is WGIGC. A propeptide spanning residues 19–32 is cleaved from the precursor; that stretch reads CIGDDVTILLTRGE.

Belongs to the MSDIN fungal toxin family. Processed by the macrocyclase-peptidase enzyme POPB to yield a toxic cyclic decapeptide. POPB first removes 10 residues from the N-terminus. Conformational trapping of the remaining peptide forces the enzyme to release this intermediate rather than proceed to macrocyclization. The enzyme rebinds the remaining peptide in a different conformation and catalyzes macrocyclization of the N-terminal 8 residues.

Functionally, toxin belonging to the bicyclic octapeptides amatoxins that acts by binding non-competitively to RNA polymerase II and greatly slowing the elongation of transcripts from target promoters. The protein is Beta-amanitin proprotein of Amanita phalloides (Death cap).